A 400-amino-acid chain; its full sequence is Elongation factor Tu (400 aa).

In terms of domain architecture, tr-type G spans 10 to 208 (KPHLNVGTIG…TMDSYFPEPQ (199 aa)). Residues 19–26 (GHIDHGKT) are G1. 19-26 (GHIDHGKT) is a GTP binding site. T26 serves as a coordination point for Mg(2+). Residues 60–64 (GITIN) are G2. The tract at residues 81 to 84 (DCPG) is G3. GTP is bound by residues 81–85 (DCPGH) and 136–139 (NKTD). The G4 stretch occupies residues 136–139 (NKTD). A G5 region spans residues 174–176 (SAL).

It belongs to the TRAFAC class translation factor GTPase superfamily. Classic translation factor GTPase family. EF-Tu/EF-1A subfamily. Monomer.

It localises to the cytoplasm. The catalysed reaction is GTP + H2O = GDP + phosphate + H(+). GTP hydrolase that promotes the GTP-dependent binding of aminoacyl-tRNA to the A-site of ribosomes during protein biosynthesis. This chain is Elongation factor Tu, found in Thermosipho africanus (strain TCF52B).